We begin with the raw amino-acid sequence, 825 residues long: Interleukin-4 receptor subunit alpha (825 aa).

A signal peptide spans 1–25; it reads MGWLCSGLLFPVSCLVLLQVASSGN. At 26-232 the chain is on the extracellular side; sequence MKVLQEPTCV…NSYREPFEQH (207 aa). Residues cysteine 34 and cysteine 44 are joined by a disulfide bond. Residue asparagine 53 is glycosylated (N-linked (GlcNAc...) asparagine). A disulfide bridge links cysteine 74 with cysteine 86. Residues asparagine 98, asparagine 128, asparagine 134, asparagine 176, and asparagine 209 are each glycosylated (N-linked (GlcNAc...) asparagine). Residues 125–224 enclose the Fibronectin type-III domain; it reads APGNLTVHTN…WSPSTKWHNS (100 aa). The WSXWS motif motif lies at 212-216; that stretch reads WSEWS. Residues 233–256 form a helical membrane-spanning segment; the sequence is LLLGVSVSCIVILAVCLLCYVSIT. Residues 257 to 825 are Cytoplasmic-facing; the sequence is KIKKEWWDQI…SVGPTYMRVS (569 aa). A Box 1 motif motif is present at residues 262 to 270; it reads WWDQIPNPA. 2 disordered regions span residues 373 to 397 and 433 to 485; these read EEEE…DFQE and LPPS…LTCT. Positions 437 to 557 are required for IRS1 activation and IL4-induced cell growth; it reads GSTSAHMPWD…ETWEQILRRN (121 aa). The segment covering 475–485 has biased composition (polar residues); sequence PTQSPDNLTCT. Phosphotyrosine is present on residues tyrosine 497, tyrosine 575, tyrosine 603, and tyrosine 631. The tract at residues 558 to 657 is required for IL4-induced gene expression; it reads VLQHGAAAAP…VPVPLFTFGL (100 aa). A disordered region spans residues 651–703; that stretch reads PLFTFGLDREPPRSPQSSHLPSSSPEHLGLEPGEKVEDMPKPPLPQEQATDPL. A compositionally biased stretch (low complexity) spans 665–677; that stretch reads PQSSHLPSSSPEH. Positions 678–690 are enriched in basic and acidic residues; the sequence is LGLEPGEKVEDMP. The short motif at 711 to 716 is the ITIM motif element; that stretch reads IVYSAL. The interval 782-809 is disordered; sequence PSGISEKSKSSSSFHPAPGNAQSSSQTP.

The protein belongs to the type I cytokine receptor family. Type 4 subfamily. In terms of assembly, the functional IL4 receptor is formed by initial binding of IL4 to IL4R. Subsequent recruitment to the complex of the common gamma chain, in immune cells, creates a type I receptor and, in non-immune cells, of IL13RA1 forms a type II receptor. IL4R can also interact with the IL13/IL13RA1 complex to form a similar type II receptor. Interacts with PIK3C3. Interacts with the SH2-containing phosphatases, PTPN6/SHIP1, PTPN11/SHIP2 and INPP5D/SHIP. Interacts with JAK1 through a Box 1-containing region; inhibited by SOCS5. Interacts with SOCS5; inhibits IL4 signaling. Interacts with JAK3. Interacts with CLM1. Interacts with IL13RA2. On IL4 binding, phosphorylated on C-terminal tyrosine residues. Phosphorylation on any one of tyrosine residues, Tyr-575, Tyr-603 or Tyr-631, is required for STAT6-induced gene induction. In terms of processing, the soluble form (sIL4R/IL4BP) can also be produced by proteolytic cleavage at the cell surface (shedding) by a metalloproteinase. In terms of tissue distribution, isoform 1 and isoform 2 are highly expressed in activated T-cells.

Its subcellular location is the cell membrane. The protein resides in the secreted. Functionally, receptor for both interleukin 4 and interleukin 13. Couples to the JAK1/2/3-STAT6 pathway. The IL4 response is involved in promoting Th2 differentiation. The IL4/IL13 responses are involved in regulating IgE production and, chemokine and mucus production at sites of allergic inflammation. In certain cell types, can signal through activation of insulin receptor substrates, IRS1/IRS2. Its function is as follows. Soluble IL4R (sIL4R) inhibits IL4-mediated cell proliferation and IL5 up-regulation by T-cells. The protein is Interleukin-4 receptor subunit alpha (IL4R) of Homo sapiens (Human).